The sequence spans 887 residues: Amyloid-beta-like protein (887 aa).

A signal peptide spans 1-27 (MCAALRRNLLLRSLWVVLAIGTAQVQA). At 28-813 (ASPRWEPQIA…HAAKEGRNVY (786 aa)) the chain is on the extracellular side. Residues 30-133 (PRWEPQIAVL…KPFRCLGPFQ (104 aa)) are GFLD subdomain. The 170-residue stretch at 30–199 (PRWEPQIAVL…SGVEFVCCPK (170 aa)) folds into the E1 domain. 6 cysteine pairs are disulfide-bonded: cysteine 40–cysteine 70, cysteine 81–cysteine 128, cysteine 106–cysteine 116, cysteine 143–cysteine 197, cysteine 154–cysteine 184, and cysteine 168–cysteine 196. Residues 141–199 (EGCLFDHIHNASRCWPFVRWNQTGAAACQERGMQMRSFAMLLPCGISVFSGVEFVCCPK) are cuBD subdomain. N-linked (GlcNAc...) asparagine glycans are attached at residues asparagine 150 and asparagine 161. Disordered regions lie at residues 225 to 365 (NDEL…STPQ) and 377 to 396 (NSGNSGTGAGAPPSTAQPTS). N-linked (GlcNAc...) asparagine glycosylation is found at asparagine 237 and asparagine 240. Over residues 246 to 267 (NEDDLDDEDDLMGDDEEDDMVA) the composition is skewed to acidic residues. Residues 268–292 (DEAATAGGSPNTGSSGDSNSGSLDD) show a composition bias toward low complexity. Residues 293–321 (INAEYDSGEEGDNYEEDGAGSESEAEVEA) are compositionally biased toward acidic residues. Over residues 329 to 352 (AKVVSLKSDSSSPSSAPVAPAPEK) the composition is skewed to low complexity. The 203-residue stretch at 395–597 (TSDPYFTHFD…AKIAQLMNDY (203 aa)) folds into the E2 domain. An N-linked (GlcNAc...) asparagine glycan is attached at asparagine 574. The segment at 675-743 (KSQVAEQQSQ…TEYGEATVSS (69 aa)) is disordered. Low complexity predominate over residues 681-699 (QQSQPTQSSTQSQAQQQQQ). The chain crosses the membrane as a helical span at residues 814–834 (FTLSFAGIALMAAVFVGVAVA). Over 835-887 (KWRTSRSPHAQGFIEVDQNVTTHHPIVREEKIVPNMQINGYENPTYKYFEVKE) the chain is Cytoplasmic. The YENPXY motif signature appears at 875–880 (YENPTY).

This sequence belongs to the APP family. Interacts (via the intracellular domain, ICD) with APP-BP1. Expressed in postmitotic neurons in the central and peripheral nervous systems. Within the nervous system, transcripts are not observed in neuroblasts, newly generated neurons and at least one class of presumed glial cells.

It localises to the membrane. Functionally, during development, plays a role in the regulation of the neddylation pathway. Appl and APP-BP1 interact antagonistically during development. In Drosophila melanogaster (Fruit fly), this protein is Amyloid-beta-like protein (Appl).